The chain runs to 276 residues: Elongation factor Ts (276 aa).

Residues 80–83 are involved in Mg(2+) ion dislocation from EF-Tu; that stretch reads TDFV.

Belongs to the EF-Ts family.

The protein resides in the cytoplasm. Its function is as follows. Associates with the EF-Tu.GDP complex and induces the exchange of GDP to GTP. It remains bound to the aminoacyl-tRNA.EF-Tu.GTP complex up to the GTP hydrolysis stage on the ribosome. The protein is Elongation factor Ts of Kocuria rhizophila (strain ATCC 9341 / DSM 348 / NBRC 103217 / DC2201).